We begin with the raw amino-acid sequence, 826 residues long: MRCQVWNVIELNLSSSCLHGLLNSKSNIFSLQNLRFLDLSNNHFSGQILSSLGNFSSLTTLDLSENHFSGQIPSSLGNLLHLTSLDLTDNNFVGDIPTSLGNLSHLTLLLLGANNLVGEIPFSLGNLSHLTDLTLCENDLAGEIPSSFENLSHLTNLDLSQNNLVGEIPSFFGSFNQLVSLAVEENEFTGNFLLILLNLTNLSDLSLSRNQFTGTLPPNMSSLSNLVLFYADANAFTGTIPSSLLNIPSLSCFDLSDNQLNGNIEFGNISSSLSDLLLGNNNFRGSIHKSISKLVNLYTLDLSHFNTQGSINFSIFSDLKLLVDLHLSHLNTTTTIDLNTFLSSFKSLDTLDLSGNHISAINKSSVSNPVTTARPGLGLTNPLLLSRFNLSGCGVTEFPEFLRTQQTMEILDISNNKINGQVPGWLWTLPTLDYVNLSNNTFTGFQRLMVPSSWQPSMNYFSGANNNFTGNLPAFICAFTLQALHLRKNHLSGVFPENISESLKSLDVGHNQLVGKLPRSLVRISSLEVLNVENNKINDTFPFWLSSLEELQVLVLRSNAFHGPMQQTRFPNLRIIDVSHNHFNGTLPSDFFVNWTVMFLLGENEDQFNGEYMGTSYYSDSIVVMNKGLEMEMVRILKIFTSVDFSRNKFEGEIPKSIGLLKELHVLNLSSNTFTGHIPSSMGKLRELESLDVAQNKLSGDIPQDLGDLSYLAYMNFSHNQLVGPLPGGTQFLTQNCSSFEENAGHFGPSLEKVCDIHGKTMQESEMPGSEEDEEEVISWIAATIGFIPGIAFGLMMGYILVCYKPEWFMNVFGKNKSRSTSSTTR.

The Extracellular segment spans residues 1 to 780 (MRCQVWNVIE…EEDEEEVISW (780 aa)). 7 LRR repeats span residues 5-31 (VWNV…IFSL), 32-54 (QNLR…SLGN), 55-79 (FSSL…LGNL), 81-103 (HLTS…LGNL), 104-127 (SHLT…LGNL), 128-150 (SHLT…SFEN), and 151-177 (LSHL…SFNQ). N-linked (GlcNAc...) asparagine glycosylation is found at Asn12 and Asn54. N-linked (GlcNAc...) asparagine glycosylation is found at Asn102, Asn126, and Asn150. One copy of the LRR 8; degenerate repeat lies at 178–198 (LVSLAVEENEFTGNFLLILLN). N-linked (GlcNAc...) asparagine glycosylation is found at Asn198, Asn201, and Asn219. LRR repeat units follow at residues 199–223 (LTNL…MSSL), 225–247 (NLVL…LLNI), 248–271 (PSLS…NISS), 273–294 (LSDL…ISKL), 296–318 (NLYT…IFSD), 319–343 (LKLL…TFLS), 345–368 (FKSL…SVSN), 382–405 (PLLL…LRTQ), 406–429 (QTME…LWTL), 430–452 (PTLD…MVPS), 455–478 (QPSM…FICA), 479–500 (FTLQ…ENIS), 501–524 (ESLK…LVRI), 525–550 (SSLE…SLEE), 552–570 (QVLV…QTRF), 571–594 (PNLR…FFVN), 637–661 (LKIF…IGLL), 662–685 (KELH…MGKL), 686–709 (RELE…LGDL), and 711–734 (YLAY…QFLT). Asn268 carries N-linked (GlcNAc...) asparagine glycosylation. N-linked (GlcNAc...) asparagine glycans are attached at residues Asn312, Asn331, Asn362, and Asn389. N-linked (GlcNAc...) asparagine glycosylation is found at Asn436, Asn439, Asn467, and Asn498. A glycan (N-linked (GlcNAc...) asparagine) is linked at Asn538. Residues Asn584 and Asn594 are each glycosylated (N-linked (GlcNAc...) asparagine). The N-linked (GlcNAc...) asparagine glycan is linked to Asn668. 2 N-linked (GlcNAc...) asparagine glycosylation sites follow: Asn716 and Asn736. The helical transmembrane segment at 781–801 (IAATIGFIPGIAFGLMMGYIL) threads the bilayer. The Cytoplasmic portion of the chain corresponds to 802–826 (VCYKPEWFMNVFGKNKSRSTSSTTR).

Belongs to the RLP family.

Its subcellular location is the cell membrane. The protein is Receptor-like protein 18 of Arabidopsis thaliana (Mouse-ear cress).